The sequence spans 287 residues: Protease HtpX (287 aa).

2 helical membrane-spanning segments follow: residues 4 to 24 and 33 to 53; these read IFLLIATNFAILLVASIVMSI and GGLLVFAAIFGFGGSFISLAI. Residue histidine 139 participates in Zn(2+) binding. Glutamate 140 is an active-site residue. Histidine 143 contributes to the Zn(2+) binding site. The next 2 helical transmembrane spans lie at 154–174 and 195–215; these read LIQGVVNTFVIFAARVVAGII and AVVFVLDMLFGILASMIVAYF. Glutamate 220 lines the Zn(2+) pocket.

It belongs to the peptidase M48B family. Requires Zn(2+) as cofactor.

It localises to the cell inner membrane. The polypeptide is Protease HtpX (Shewanella frigidimarina (strain NCIMB 400)).